A 415-amino-acid polypeptide reads, in one-letter code: Phosphoglycerate kinase (415 aa).

Residues V22, D23, F24, N25, Q37, R38, S61, H62, G64, L120, R121, H168, and R169 each coordinate (2R)-3-phosphoglycerate. G212 is an ADP binding site. G212 serves as a coordination point for CDP. Residues A213 and K214 each coordinate AMP. A213 is an ATP binding site. A213 contributes to the Mg(2+) binding site. CDP is bound at residue D217. Position 217 (D217) interacts with Mg(2+). Residue K218 participates in AMP binding. An ATP-binding site is contributed by K218. An ADP-binding site is contributed by G236. Position 236 (G236) interacts with CDP. AMP is bound by residues G237 and G311. The ATP site is built by G237 and G311. G336 and F341 together coordinate CDP. F341 serves as a coordination point for ADP. E342 provides a ligand contact to AMP. ATP-binding residues include E342, D373, and T374. D373 contributes to the Mg(2+) binding site.

The protein belongs to the phosphoglycerate kinase family. In terms of assembly, monomer. It depends on Mg(2+) as a cofactor.

The protein resides in the cytoplasm. The enzyme catalyses (2R)-3-phosphoglycerate + ATP = (2R)-3-phospho-glyceroyl phosphate + ADP. It participates in carbohydrate degradation; glycolysis; pyruvate from D-glyceraldehyde 3-phosphate: step 2/5. This is Phosphoglycerate kinase (PGK) from Opisthorchis sinensis (Clonorchis sinensis).